A 434-amino-acid polypeptide reads, in one-letter code: Alpha-enolase (434 aa).

Ser-2 is modified (N-acetylserine). Lys-5 is modified (N6-acetyllysine). Ser-40 is a binding site for Mg(2+). Tyr-44 bears the Phosphotyrosine mark. Lys-60 is subject to N6-acetyllysine; alternate. Lys-60 bears the N6-succinyllysine; alternate mark. An N6-acetyllysine mark is found at Lys-64 and Lys-71. Lys-89 carries the N6-acetyllysine; alternate modification. Residue Lys-89 is modified to N6-succinyllysine; alternate. The residue at position 126 (Lys-126) is an N6-acetyllysine. Residues His-158 and Glu-167 each contribute to the substrate site. Residues Lys-193 and Lys-199 each carry the N6-acetyllysine modification. Lys-202 bears the N6-acetyllysine; alternate mark. Lys-202 is covalently cross-linked (Glycyl lysine isopeptide (Lys-Gly) (interchain with G-Cter in SUMO2); alternate). Catalysis depends on Glu-210, which acts as the Proton donor. N6-acetyllysine; alternate is present on residues Lys-228 and Lys-233. Lys-228 carries the post-translational modification N6-succinyllysine; alternate. An N6-(2-hydroxyisobutyryl)lysine; alternate modification is found at Lys-228. Lys-233 bears the N6-malonyllysine; alternate mark. Residue Asp-245 participates in Mg(2+) binding. Lys-256 carries the N6-acetyllysine modification. The residue at position 263 (Ser-263) is a Phosphoserine. Lys-281 is subject to N6-acetyllysine; alternate. Lys-281 bears the N6-(2-hydroxyisobutyryl)lysine; alternate mark. Lys-285 is subject to N6-acetyllysine. Tyr-287 is modified (phosphotyrosine). Ser-291 carries the phosphoserine modification. Residues Glu-293 and Asp-318 each contribute to the Mg(2+) site. Residues Glu-293 and Asp-318 each coordinate substrate. Residues Lys-335 and Lys-343 each carry the N6-acetyllysine modification. The Proton acceptor role is filled by Lys-343. Residues 370–373 (SHRS) and Lys-394 each bind substrate. The interval 405–434 (AKYNQILRIEEELGSKAKFAGRSFRNPLAK) is required for interaction with PLG. Lys-406 bears the N6-acetyllysine mark. Lys-420 is subject to N6-acetyllysine; alternate. The residue at position 420 (Lys-420) is an N6-succinyllysine; alternate. Lys-420 bears the N6-malonyllysine; alternate mark.

It belongs to the enolase family. In terms of assembly, mammalian enolase is composed of 3 isozyme subunits, alpha, beta and gamma, which can form homodimers or heterodimers which are cell-type and development-specific. ENO1 interacts with PLG in the neuronal plasma membrane and promotes its activation. The C-terminal lysine is required for this binding. Interacts with ENO4 and PGAM2. Interacts with CMTM6. It depends on Mg(2+) as a cofactor. Post-translationally, ISGylated. In terms of processing, lysine 2-hydroxyisobutyrylation (Khib) by p300/EP300 activates the phosphopyruvate hydratase activity. Expressed in flagella of epididymal sperm. The alpha/alpha homodimer is expressed in embryo and in most adult tissues. The alpha/beta heterodimer and the beta/beta homodimer are found in striated muscle, and the alpha/gamma heterodimer and the gamma/gamma homodimer in neurons.

Its subcellular location is the cytoplasm. It localises to the cell membrane. The enzyme catalyses (2R)-2-phosphoglycerate = phosphoenolpyruvate + H2O. The protein operates within carbohydrate degradation; glycolysis; pyruvate from D-glyceraldehyde 3-phosphate: step 4/5. Functionally, glycolytic enzyme that catalyzes the conversion of 2-phosphoglycerate to phosphoenolpyruvate. In addition to glycolysis, involved in various processes such as growth control, hypoxia tolerance and allergic responses. May also function in the intravascular and pericellular fibrinolytic system due to its ability to serve as a receptor and activator of plasminogen on the cell surface of several cell-types such as leukocytes and neurons. Stimulates immunoglobulin production. The polypeptide is Alpha-enolase (Eno1) (Rattus norvegicus (Rat)).